We begin with the raw amino-acid sequence, 364 residues long: Putative acetyl-CoA C-acetyltransferase YhfS (364 aa).

The Acyl-thioester intermediate role is filled by cysteine 82. The active-site Proton acceptor is histidine 318.

It belongs to the thiolase-like superfamily. Thiolase family.

In terms of biological role, may be involved in fatty acid metabolism. This chain is Putative acetyl-CoA C-acetyltransferase YhfS (yhfS), found in Bacillus subtilis (strain 168).